The chain runs to 560 residues: Phenol regulator MopR (560 aa).

Positions 106 and 134 each coordinate phenol. Residues cysteine 155, glutamate 178, cysteine 181, and cysteine 189 each contribute to the Zn(2+) site. The Sigma-54 factor interaction domain maps to 245-474 (AVGESVAYRK…LENLLERATL (230 aa)). Residues 273 to 280 (GETGVGKE) and 336 to 345 (AHGGTIFLDE) each bind ATP.

Homodimer.

Activity is triggered by phenol binding. In terms of biological role, involved in the regulation of the phenol degradation pathway. Activates phenol hydroxylase expression in the presence of phenol. The polypeptide is Phenol regulator MopR (Acinetobacter guillouiae (Acinetobacter genomosp. 11)).